The chain runs to 248 residues: Probable phosphatase VFMJ11_A0091 (248 aa).

Residues H8, H10, H16, H41, E74, H102, H132, D194, and H196 each coordinate Zn(2+).

It belongs to the PHP family. Zn(2+) serves as cofactor.

This Aliivibrio fischeri (strain MJ11) (Vibrio fischeri) protein is Probable phosphatase VFMJ11_A0091.